Reading from the N-terminus, the 527-residue chain is Bifunctional purine biosynthesis protein PurH (527 aa).

One can recognise an MGS-like domain in the interval 1–144 (MNRRALISVS…KNHESVAIIV (144 aa)).

It belongs to the PurH family.

The enzyme catalyses (6R)-10-formyltetrahydrofolate + 5-amino-1-(5-phospho-beta-D-ribosyl)imidazole-4-carboxamide = 5-formamido-1-(5-phospho-D-ribosyl)imidazole-4-carboxamide + (6S)-5,6,7,8-tetrahydrofolate. The catalysed reaction is IMP + H2O = 5-formamido-1-(5-phospho-D-ribosyl)imidazole-4-carboxamide. It participates in purine metabolism; IMP biosynthesis via de novo pathway; 5-formamido-1-(5-phospho-D-ribosyl)imidazole-4-carboxamide from 5-amino-1-(5-phospho-D-ribosyl)imidazole-4-carboxamide (10-formyl THF route): step 1/1. It functions in the pathway purine metabolism; IMP biosynthesis via de novo pathway; IMP from 5-formamido-1-(5-phospho-D-ribosyl)imidazole-4-carboxamide: step 1/1. This chain is Bifunctional purine biosynthesis protein PurH, found in Heliobacterium modesticaldum (strain ATCC 51547 / Ice1).